A 706-amino-acid chain; its full sequence is Choline transporter-like protein 2 (706 aa).

At 1-33 (MGKDSQNYYGKHGTPQKYDPTFKGPIYNRGCTD) the chain is on the cytoplasmic side. Thr-14 bears the Phosphothreonine mark. The helical transmembrane segment at 34–54 (VICCVLLFLAIVGYVAVGIIA) threads the bilayer. The Extracellular segment spans residues 55–232 (WTHGDPRKVI…QIFEDYTVSW (178 aa)). N-linked (GlcNAc...) asparagine glycosylation is found at Asn-187 and Asn-200. The helical transmembrane segment at 233–253 (YWIIIGLVIAMVLSLLFIVLL) threads the bilayer. Residues 254 to 256 (RFL) lie on the Cytoplasmic side of the membrane. A helical membrane pass occupies residues 257–277 (AGIMVWVMIVMVILVLGYGIF). Residues 278–315 (HCYMEYSRLRGEAGSDVSLVDLGFQTDLRVYLHLRQTW) lie on the Extracellular side of the membrane. Residues 316–336 (MAFMIILSILEVVIILLLIFL) form a helical membrane-spanning segment. At 337–364 (RKRILIAIALIKEASRAVGHVMCSLLYP) the chain is on the cytoplasmic side. The helical transmembrane segment at 365–385 (LVTFFLLCLCIAYWASTSVFL) threads the bilayer. Residues 386–454 (STSNTAVYKV…LQIFNAFMFF (69 aa)) are Extracellular-facing. N-linked (GlcNAc...) asparagine glycosylation is present at Asn-417. A helical transmembrane segment spans residues 455-477 (WLANFVLALGQVTLAGAFASYYW). Topologically, residues 478-504 (AMRKPDDMPAFPLFSAFGRALRYHTGS) are cytoplasmic. The chain crosses the membrane as a helical span at residues 505 to 525 (LAFGSLILAIVQIIRVMLEYL). Residues 526-563 (DQRLKAAQNKFAKFLMVCLKCCFWCLEKFIKFLNRNAY) are Extracellular-facing. The helical transmembrane segment at 564–584 (IMIAIYGTNFCTSARNAFFLL) threads the bilayer. At 585–599 (MRNIIRVAVLDKVTD) the chain is on the cytoplasmic side. Residues 600–620 (FLFLLGKLLIVGSVGILAFFF) form a helical membrane-spanning segment. Residues 621-638 (FTHRIRIVQDTAPPLNYY) lie on the Extracellular side of the membrane. A helical membrane pass occupies residues 639–659 (WVPILTVIIGSYLIAHGFFSV). Topologically, residues 660–706 (YGMCVDTLFLCFLEDLERNDGSAERPYFMSSTLKKLLNKTNKKVAES) are cytoplasmic.

Belongs to the CTL (choline transporter-like) family. In terms of assembly, interacts with COCH. In terms of processing, glycosylated, glycosylation differs from tissue to tissue. The molecular mass of the mature glycosylated protein is highest in kidney, followed by lung, colon and spleen, then brain and tongue. In terms of tissue distribution, expressed at high levels in lung, colon, inner ear and spleen (at protein level). Progressively lower levels in brain, tongue, liver and kidney (at protein level). In the kidney, prominent expression in glomeruli in the lining of Bowman's capsule and on the mesangial cells adjacent to the vessels within the glomerulus (at protein level). Strongly expressed on the membranes of splenocytes and in lung parenchyme (at protein level). Expressed at higher levels than isoform 2 in colon, heart, kidney, lung, cochlea, tongue and muscle, as well as in the inner ear. As to expression, predominantly expressed in brain, liver and spleen.

The protein localises to the cell membrane. The protein resides in the mitochondrion outer membrane. The catalysed reaction is choline(out) + n H(+)(in) = choline(in) + n H(+)(out). It carries out the reaction ethanolamine(out) + n H(+)(in) = ethanolamine(in) + n H(+)(out). In terms of biological role, choline/H+ antiporter, mainly in mitochodria. Also acts as a low-affinity ethanolamine/H+ antiporter, regulating the supply of extracellular ethanolamine (Etn) for the CDP-Etn pathway, redistribute intracellular Etn and balance the CDP-Cho and CDP-Etn arms of the Kennedy pathway. The protein is Choline transporter-like protein 2 (Slc44a2) of Mus musculus (Mouse).